The chain runs to 268 residues: Ethylene-responsive transcription factor ERN1 (268 aa).

Residues Met1–Asn21 are compositionally biased toward polar residues. Residues Met1–Thr36 are disordered. Residues Lys38 to Ile95 constitute a DNA-binding region (AP2/ERF). Residues Asn114–Leu154 are disordered. The segment covering Ser131–Asn146 has biased composition (low complexity).

This sequence belongs to the AP2/ERF transcription factor family. ERF subfamily. As to expression, expressed in roots, root hairs and leaves. Expressed in root epidermis and root hairs.

Its subcellular location is the nucleus. In terms of biological role, transcription factor involved in symbiotic nodule signaling in response to rhizobial Nod factors (NFs). Binds to the GCC-box (NF-responsive box) of ENOD11 promoter. Acts as a transcriptional activator of NF-responsive box-containing target gene promoters in root hairs. Functions as a transcriptional regulator required for root infection by symbiotic rhizobia, infection thread (IT) formation and maintenance, and nodule development. Necessary for NF-induced gene expression and spontaneous nodulation activated by CCAMK. Functions downstream of CCAMK to activate nodulation gene expression. Involved in early stages of root nodule development. Functions redundantly with ERN2. Is essential with ERN2 for the initiation of root hair infection, and nodule organogenesis and development. Required for accurate expression of the NF signaling genes ENOD11 and ENOD12. In Medicago truncatula (Barrel medic), this protein is Ethylene-responsive transcription factor ERN1.